Consider the following 345-residue polypeptide: Heat-inducible transcription repressor HrcA (345 aa).

It belongs to the HrcA family.

Negative regulator of class I heat shock genes (grpE-dnaK-dnaJ and groELS operons). Prevents heat-shock induction of these operons. The sequence is that of Heat-inducible transcription repressor HrcA from Listeria welshimeri serovar 6b (strain ATCC 35897 / DSM 20650 / CCUG 15529 / CIP 8149 / NCTC 11857 / SLCC 5334 / V8).